We begin with the raw amino-acid sequence, 151 residues long: Small ribosomal subunit protein uS19 (151 aa).

It belongs to the universal ribosomal protein uS19 family.

Its function is as follows. Protein S19 forms a complex with S13 that binds strongly to the 16S ribosomal RNA. This is Small ribosomal subunit protein uS19 from Picrophilus torridus (strain ATCC 700027 / DSM 9790 / JCM 10055 / NBRC 100828 / KAW 2/3).